Reading from the N-terminus, the 358-residue chain is uncharacterized protein (358 aa).

It belongs to the methyltransferase superfamily.

This is an uncharacterized protein from Mycobacterium tuberculosis (strain CDC 1551 / Oshkosh).